The following is a 250-amino-acid chain: Anti-Pycsar protein Apyc1 (250 aa).

Positions 19–220 (YNNNALVKCN…AVQEMIMLMH (202 aa)) are beta-lactamase-like. Positions 61, 63, 65, 66, 146, 166, and 220 each coordinate Zn(2+).

It belongs to the anti-Pycsar protein Apyc1 family. In terms of assembly, homodimer. The cofactor is Zn(2+).

It carries out the reaction 3',5'-cyclic CMP + H2O = CMP + H(+). It catalyses the reaction 3',5'-cyclic UMP + H2O = UMP + H(+). Its function is as follows. Counteracts the endogenous Pycsar antiviral defense system. Phosphodiesterase that enables metal-dependent hydrolysis of host cyclic nucleotide Pycsar defense signals such as cCMP and cUMP. In Paenibacillus xerothermodurans, this protein is Anti-Pycsar protein Apyc1.